Reading from the N-terminus, the 489-residue chain is Lysine--tRNA ligase (489 aa).

Positions 398 and 405 each coordinate Mg(2+).

This sequence belongs to the class-II aminoacyl-tRNA synthetase family. As to quaternary structure, homodimer. Mg(2+) is required as a cofactor.

The protein resides in the cytoplasm. It carries out the reaction tRNA(Lys) + L-lysine + ATP = L-lysyl-tRNA(Lys) + AMP + diphosphate. This is Lysine--tRNA ligase from Moorella thermoacetica (strain ATCC 39073 / JCM 9320).